The chain runs to 146 residues: Arginine repressor (146 aa).

Belongs to the ArgR family.

The protein resides in the cytoplasm. The protein operates within amino-acid biosynthesis; L-arginine biosynthesis [regulation]. Its function is as follows. Regulates arginine biosynthesis genes. This is Arginine repressor from Parabacteroides distasonis (strain ATCC 8503 / DSM 20701 / CIP 104284 / JCM 5825 / NCTC 11152).